The primary structure comprises 966 residues: Catenin alpha-2 (966 aa).

Residues 924 to 940 (PEKKPLVKREKPEEYQT) show a composition bias toward basic and acidic residues. Residues 924–952 (PEKKPLVKREKPEEYQTRVRRGSQKKHIS) are disordered. The segment covering 941–951 (RVRRGSQKKHI) has biased composition (basic residues).

The protein belongs to the vinculin/alpha-catenin family.

It localises to the cell membrane. The protein localises to the cytoplasm. Its subcellular location is the cytoskeleton. It is found in the cell junction. The protein resides in the adherens junction. It localises to the cell projection. The protein localises to the axon. Its subcellular location is the nucleus. Its function is as follows. May function as a linker between cadherin adhesion receptors and the cytoskeleton to regulate cell-cell adhesion and differentiation in the nervous system. In Xenopus tropicalis (Western clawed frog), this protein is Catenin alpha-2 (ctnna2).